The primary structure comprises 568 residues: Phosphoprotein (568 aa).

Positions 1–23 (MDQDALISKEDSEVEREASGGRE) are disordered. Residues 7–20 (ISKEDSEVEREASG) show a composition bias toward basic and acidic residues. The interval 33–41 (DAVLSSEPT) is N0 binding. The tract at residues 54-317 (INTLQRPGST…SPETDATKKG (264 aa)) is disordered. Basic and acidic residues-rich tracts occupy residues 99–110 (AEAHARNVDKQN), 150–168 (GAED…RGED), and 175–193 (EEIR…RADN). Phosphoserine; by host is present on residues Ser249, Ser257, and Ser260. Residues 344–411 (FESSRDASYV…SFRDIYKRFS (68 aa)) are multimerization. The stretch at 364–429 (YAEMAFNVCG…LLMSNLSTLH (66 aa)) forms a coiled coil. Positions 412–445 (EYQKEQNSLLMSNLSTLHIITDRGGKTDNPDSPT) are l protein binding. The disordered stretch occupies residues 433–462 (DRGGKTDNPDSPTRSPSVFAKTKENKTKAT). Phosphoserine; by host is present on residues Ser447 and Ser449. A compositionally biased stretch (basic and acidic residues) spans 453 to 462 (KTKENKTKAT). Residues 479 to 568 (DLLREDEFRE…VEEDIESLTN (90 aa)) form an interaction with the nucleocapsid (N-RNA) region.

Belongs to the respirovirus P protein family. Homotetramer. Interacts (via multimerization domain) with polymerase L; this interaction forms the polymerase complex. Interacts (via N-terminus) with N0; this interaction allows P to chaperon N0 before encapsidation and form the N-P complex. Interacts (via C-terminus) with N-RNA template; this interaction positions the polymerase on the template. In terms of processing, phosphorylated by PKC/PRKCZ, and other unknown kinases. Phosphorylation is necessary for viral transcription and replication. The N-terminus contains the majority of phosphorylated sites. Ser-249 is the major site of phosphorylation, but is not necessary for most functions.

It localises to the host cytoplasm. Essential cofactor of the RNA polymerase L that plays a central role in the transcription and replication by forming the polymerase complex with RNA polymerase L and recruiting L to the genomic N-RNA template for RNA synthesis. Also plays a central role in the encapsidation of nascent RNA chains by forming the encapsidation complex with the nucleocapsid protein N (N-P complex). Acts as a chaperone for newly synthesized free N protein, so-called N0, allowing encapsidation of nascent RNA chains during replication. The nucleoprotein protein N prevents excessive phosphorylation of P, which leads to down-regulation of viral transcription/ replication. Participates, together with N, in the formation of viral factories (viroplasms), which are large inclusions in the host cytoplasm where replication takes place. Recruits host PI4KB and remodel the host endoplasmic reticulum membrane to form viral replication factories. The protein is Phosphoprotein (P/V/C) of Sendai virus (strain Ohita) (SeV).